The primary structure comprises 263 residues: Type II restriction enzyme TaqI (263 aa).

Post-translationally, only 15% of purified enzyme (upon expression in E.coli) can be sequenced, suggesting the remainder has a blocked N-terminus.

It carries out the reaction Endonucleolytic cleavage of DNA to give specific double-stranded fragments with terminal 5'-phosphates.. Functionally, a P subtype restriction enzyme that recognizes the double-stranded sequence 5'-TCGA-3' and cleaves after T-1. This Thermus aquaticus protein is Type II restriction enzyme TaqI (taqIR).